Consider the following 111-residue polypeptide: Protein IDA-LIKE 5 (111 aa).

An N-terminal signal peptide occupies residues 1 to 27; it reads MGNKRIKAMMILVVMIMMVFSWRICEA. Over residues 46-56 the composition is skewed to basic residues; that stretch reads RRPNPRNHHHQ. Positions 46 to 65 are disordered; sequence RRPNPRNHHHQNQGFNGDDY.

In terms of tissue distribution, expressed mainly in flowers. Lower levels in buds and seedlings. Detected in vascular tissues and in hydathodes.

It is found in the secreted. Its subcellular location is the extracellular space. Its function is as follows. May be involved in floral abscission. This chain is Protein IDA-LIKE 5 (IDL5), found in Arabidopsis thaliana (Mouse-ear cress).